The following is a 283-amino-acid chain: Pantothenate synthetase (283 aa).

30–37 (MGNLHAGH) contacts ATP. H37 functions as the Proton donor in the catalytic mechanism. Residue Q61 participates in (R)-pantoate binding. Q61 lines the beta-alanine pocket. Residue 149–152 (GEKD) participates in ATP binding. (R)-pantoate is bound at residue Q155. ATP contacts are provided by residues V178 and 186-189 (LSSR).

Belongs to the pantothenate synthetase family. Homodimer.

The protein resides in the cytoplasm. The catalysed reaction is (R)-pantoate + beta-alanine + ATP = (R)-pantothenate + AMP + diphosphate + H(+). It participates in cofactor biosynthesis; (R)-pantothenate biosynthesis; (R)-pantothenate from (R)-pantoate and beta-alanine: step 1/1. In terms of biological role, catalyzes the condensation of pantoate with beta-alanine in an ATP-dependent reaction via a pantoyl-adenylate intermediate. The sequence is that of Pantothenate synthetase from Azotobacter vinelandii (strain DJ / ATCC BAA-1303).